The following is a 398-amino-acid chain: ATP-dependent RNA helicase eIF4A (398 aa).

Positions 25 to 53 (DSFDSMELKPELLRGVYAYGFERPSAIQQ) match the Q motif motif. The Helicase ATP-binding domain occupies 56–226 (ILPIVKGNDV…TKFMRDPVRI (171 aa)). 69 to 76 (AQSGTGKT) is an ATP binding site. A DEAD box motif is present at residues 174-177 (DEAD). Residues 237-398 (GIKQFYIAVE…EMPMNVADLI (162 aa)) enclose the Helicase C-terminal domain.

This sequence belongs to the DEAD box helicase family. eIF4A subfamily. As to quaternary structure, component of the eIF4F complex, which composition varies with external and internal environmental conditions. It is composed of at least eIF4A, eIF4E and eIF4G.

It is found in the cytoplasm. It catalyses the reaction ATP + H2O = ADP + phosphate + H(+). Functionally, ATP-dependent RNA helicase which is a subunit of the eIF4F complex involved in cap recognition and is required for mRNA binding to ribosome. In the current model of translation initiation, eIF4A unwinds RNA secondary structures in the 5'-UTR of mRNAs which is necessary to allow efficient binding of the small ribosomal subunit, and subsequent scanning for the initiator codon. In Emericella nidulans (strain FGSC A4 / ATCC 38163 / CBS 112.46 / NRRL 194 / M139) (Aspergillus nidulans), this protein is ATP-dependent RNA helicase eIF4A (tif1).